The following is a 542-amino-acid chain: GATA-type transcription factor sreA (542 aa).

Over residues 1–10 (MLTLRSSSDT) the composition is skewed to polar residues. Residues 1–172 (MLTLRSSSDT…SAQNASGCGS (172 aa)) are disordered. Residues 44 to 63 (ADLRPDSFDASRSPDGDKAS) show a composition bias toward basic and acidic residues. Composition is skewed to low complexity over residues 75-117 (SSDQ…PKAS) and 148-168 (SSTS…QNAS). Positions 178 to 196 (CPGGGSCNGTGGAVGCDGC) are cystein-rich region (CRR). Residues 210–223 (APSARQARASPSAQ) are compositionally biased toward low complexity. The segment at 210-248 (APSARQARASPSAQTSEEQAQSGLDALDSASQDASGMPK) is disordered. The segment at 250-274 (CQNCGTTLTPLWRRDDQGNTICNAC) adopts a GATA-type zinc-finger fold. A compositionally biased stretch (basic residues) spans 289–300 (MKKTVIKRRKRV). Disordered regions lie at residues 289–408 (MKKT…PATR) and 461–525 (SNAP…REAE). 2 stretches are compositionally biased toward polar residues: residues 311 to 320 (AGSSDNSSVS) and 369 to 387 (KPTQ…NHSP). The segment covering 396–407 (ESTSAESAPPAT) has biased composition (low complexity). The span at 464–483 (PARSQTQTQPQPGTRSYSPN) shows a compositional bias: polar residues. Residues 510-542 (DKVKAARRAQLQREAENMREALRAKERELASLK) adopt a coiled-coil conformation.

The protein localises to the nucleus. Its function is as follows. GATA-type transcription repressor that regulates iron acquisition genes through specific binding the GATA sequence elements of target promoters. SreA targets include genes encoding a number of key iron-regulated factors such as the siderophore biosynthesis genes. Is dispensable for growth on keratin substrates. SreA represses the expression of hapX and the siderophore system during iron sufficient conditions by an iron-sensing mechanism, while hapX represses sreA and activates the siderophore system during iron-limiting conditions resulting in efficient iron uptake and inhibition of iron-consuming pathways. This is GATA-type transcription factor sreA from Arthroderma benhamiae (strain ATCC MYA-4681 / CBS 112371) (Trichophyton mentagrophytes).